We begin with the raw amino-acid sequence, 1025 residues long: Collagen alpha-1(VI) chain (1025 aa).

An N-terminal signal peptide occupies residues 1–19 (MRLAHALLPLLLQACWVAT). The N-terminal globular domain stretch occupies residues 20 to 255 (QDIQGSKAIA…CCSFECQAAR (236 aa)). Residues 36–234 (DLFFVLDTSE…EVISQTIDTI (199 aa)) form the VWFA 1 domain. The N-linked (GlcNAc...) asparagine glycan is linked to asparagine 211. Positions 252 to 588 (QAARGPPGPR…QGPPGHVGPP (337 aa)) are disordered. Residues 256–591 (GPPGPRGDPG…PGHVGPPGPD (336 aa)) form a triple-helical region region. The short motif at 261 to 263 (RGD) is the Cell attachment site element. 2 stretches are compositionally biased toward basic and acidic residues: residues 267 to 284 (EGER…EAGD) and 300 to 333 (KGEK…DGMK). Short sequence motifs (cell attachment site) lie at residues 441–443 (RGD) and 477–479 (RGD). N-linked (GlcNAc...) asparagine glycosylation is found at asparagine 515 and asparagine 536. Positions 549 to 559 (GEVGDPGEDNN) are enriched in acidic residues. Residues 578–588 (PQGPPGHVGPP) show a composition bias toward pro residues. The interval 592–1025 (ECEILDIIMK…QTVSRKVALG (434 aa)) is C-terminal globular domain. VWFA domains lie at 614-802 (DILF…LKNI) and 826-1018 (DITI…YQTV). Residues asparagine 801 and asparagine 893 are each glycosylated (N-linked (GlcNAc...) asparagine).

The protein belongs to the type VI collagen family. In terms of assembly, trimers composed of three different chains: alpha-1(VI), alpha-2(VI), and alpha-3(VI) or alpha-4(VI) or alpha-5(VI) or alpha-6(VI). Prolines at the third position of the tripeptide repeating unit (G-X-Y) are hydroxylated in some or all of the chains.

Its subcellular location is the secreted. It is found in the extracellular space. The protein localises to the extracellular matrix. Its function is as follows. Collagen VI acts as a cell-binding protein. The chain is Collagen alpha-1(VI) chain (Col6a1) from Mus musculus (Mouse).